The following is a 163-amino-acid chain: 2-amino-4-hydroxy-6-hydroxymethyldihydropteridine pyrophosphokinase (163 aa).

The protein belongs to the HPPK family.

It catalyses the reaction 6-hydroxymethyl-7,8-dihydropterin + ATP = (7,8-dihydropterin-6-yl)methyl diphosphate + AMP + H(+). The protein operates within cofactor biosynthesis; tetrahydrofolate biosynthesis; 2-amino-4-hydroxy-6-hydroxymethyl-7,8-dihydropteridine diphosphate from 7,8-dihydroneopterin triphosphate: step 4/4. Its function is as follows. Catalyzes the transfer of pyrophosphate from adenosine triphosphate (ATP) to 6-hydroxymethyl-7,8-dihydropterin, an enzymatic step in folate biosynthesis pathway. This is 2-amino-4-hydroxy-6-hydroxymethyldihydropteridine pyrophosphokinase (folK) from Helicobacter pylori (strain ATCC 700392 / 26695) (Campylobacter pylori).